A 97-amino-acid polypeptide reads, in one-letter code: Small ribosomal subunit protein bS20 (97 aa).

This sequence belongs to the bacterial ribosomal protein bS20 family.

In terms of biological role, binds directly to 16S ribosomal RNA. The polypeptide is Small ribosomal subunit protein bS20 (Prochlorococcus marinus subsp. pastoris (strain CCMP1986 / NIES-2087 / MED4)).